The chain runs to 150 residues: Thyroid hormone-inducible hepatic protein (150 aa).

The tract at residues 83–105 is disordered; it reads KVAGNEGSEAENEAAETEEAEED. Serine 90 carries the phosphoserine modification. The segment covering 90–105 has biased composition (acidic residues); it reads SEAENEAAETEEAEED.

This sequence belongs to the SPOT14 family. In terms of assembly, homodimer. Heterodimer with MID1IP1. Interacts with THRB and PLAGL1. As to expression, highly expressed in liver, lactating mammary gland, epididymal, retroperitoneal and brown fat. Mainly expressed in tissues that synthesize triglycerides.

The protein localises to the nucleus. Its subcellular location is the cytoplasm. Its function is as follows. Plays a role in the regulation of lipogenesis, especially in lactating mammary gland. Important for the biosynthesis of triglycerides with medium-length fatty acid chains. May modulate lipogenesis by interacting with MID1IP1 and preventing its interaction with ACACA. May function as transcriptional coactivator. May modulate the transcription factor activity of THRB. The sequence is that of Thyroid hormone-inducible hepatic protein (Thrsp) from Rattus norvegicus (Rat).